Here is a 28-residue protein sequence, read N- to C-terminus: M-poneritoxin-Dq4a (28 aa).

Ala28 carries the post-translational modification Alanine amide.

Expressed by the venom gland.

Its subcellular location is the secreted. In terms of biological role, the synthetic peptide has weak antimicrobial activity against Gram-negative bacterium E.coli ATCC 10536. It does not show antimicrobial activity against the Gram-positive bacteria B.amyloliquefacies S499, L.monocytogenes 2231 and S.aureus ATCC 29213, against the Gram-negative bacteria P.putida BTP1 and P.aeruginosa PaO1, or against the fungi S.cerevisiae, R.mucilaginosa, C.cucumerinum, F.oxysporum and B.cinerea. This is M-poneritoxin-Dq4a from Dinoponera quadriceps (South American ant).